A 597-amino-acid chain; its full sequence is Lipoprotein LpqB (597 aa).

Positions 1 to 28 are cleaved as a signal peptide; the sequence is MTPGSRSAMRSRSVCGAIALAVLVTVSG. Cys29 is lipidated: N-palmitoyl cysteine. Cys29 is lipidated: S-diacylglycerol cysteine. Positions 39-51 are enriched in polar residues; sequence QAIGTINRDSPGS. The tract at residues 39–59 is disordered; it reads QAIGTINRDSPGSSVAAPAPG.

Belongs to the LpqB lipoprotein family.

Its subcellular location is the cell membrane. The protein is Lipoprotein LpqB of Rhodococcus opacus (strain B4).